The primary structure comprises 231 residues: 2-C-methyl-D-erythritol 4-phosphate cytidylyltransferase (231 aa).

This sequence belongs to the IspD/TarI cytidylyltransferase family. IspD subfamily.

The enzyme catalyses 2-C-methyl-D-erythritol 4-phosphate + CTP + H(+) = 4-CDP-2-C-methyl-D-erythritol + diphosphate. The protein operates within isoprenoid biosynthesis; isopentenyl diphosphate biosynthesis via DXP pathway; isopentenyl diphosphate from 1-deoxy-D-xylulose 5-phosphate: step 2/6. Catalyzes the formation of 4-diphosphocytidyl-2-C-methyl-D-erythritol from CTP and 2-C-methyl-D-erythritol 4-phosphate (MEP). This chain is 2-C-methyl-D-erythritol 4-phosphate cytidylyltransferase, found in Shewanella piezotolerans (strain WP3 / JCM 13877).